A 245-amino-acid chain; its full sequence is Ribonuclease P protein component 3 (245 aa).

This sequence belongs to the eukaryotic/archaeal RNase P protein component 3 family. As to quaternary structure, consists of a catalytic RNA component and at least 4-5 protein subunits.

Its subcellular location is the cytoplasm. The enzyme catalyses Endonucleolytic cleavage of RNA, removing 5'-extranucleotides from tRNA precursor.. Part of ribonuclease P, a protein complex that generates mature tRNA molecules by cleaving their 5'-ends. This Methanothermobacter thermautotrophicus (strain ATCC 29096 / DSM 1053 / JCM 10044 / NBRC 100330 / Delta H) (Methanobacterium thermoautotrophicum) protein is Ribonuclease P protein component 3.